We begin with the raw amino-acid sequence, 241 residues long: Tumor necrosis factor ligand superfamily member 13 (241 aa).

Residues Met-1 to Arg-95 constitute a propeptide that is removed on maturation. The THD domain maps to Ser-107–Leu-241. Asn-115 carries an N-linked (GlcNAc...) asparagine glycan. A disulfide bridge connects residues Cys-187 and Cys-202.

Belongs to the tumor necrosis factor family. In terms of assembly, homotrimer. The soluble form derives from the membrane form by proteolytic processing.

The protein resides in the secreted. Cytokine that binds to TNFRSF13B/TACI and to TNFRSF17/BCMA. Plays a role in the regulation of tumor cell growth. May be involved in monocyte/macrophage-mediated immunological processes. This is Tumor necrosis factor ligand superfamily member 13 (Tnfsf13) from Mus musculus (Mouse).